The following is a 142-amino-acid chain: Sorting nexin-3 (142 aa).

The region spanning 21–138 is the PX domain; the sequence is NFLEIEVRNP…ASFIQDPNWD (118 aa). Residues Arg-64, Ser-66, Lys-90, Arg-95, and Arg-104 each coordinate a 1,2-diacyl-sn-glycero-3-phospho-(1D-myo-inositol-3-phosphate).

This sequence belongs to the sorting nexin family.

The protein localises to the cytoplasm. It is found in the golgi apparatus membrane. It localises to the prevacuolar compartment membrane. Required for retention of late Golgi membrane proteins. Component of the retrieval machinery that functions by direct interaction with the cytosolic tails of certain TGN membrane proteins during the sorting/budding process at the prevacuolar compartment. Binds phosphatidylinositol 3-phosphate (PtdIns(P3)). This is Sorting nexin-3 (snx3) from Aspergillus fumigatus (strain ATCC MYA-4609 / CBS 101355 / FGSC A1100 / Af293) (Neosartorya fumigata).